Consider the following 412-residue polypeptide: Elongation factor 1-gamma 2 (412 aa).

Serine 2 carries the N-acetylserine modification. The GST N-terminal domain occupies 2 to 77 (SQGTLYINRS…YLANQVADEK (76 aa)). One can recognise a GST C-terminal domain in the interval 86-217 (DVIEKSQILR…AEKALTYTPP (132 aa)). Residues 216-253 (PPKKQKAEKPKAEKSKAEKKKDEAKPADDAAPAKKPKH) form a disordered region. Residues 220–247 (QKAEKPKAEKSKAEKKKDEAKPADDAAP) show a composition bias toward basic and acidic residues. Residues 251–412 (PKHPLEALGK…KEIVDGKVLK (162 aa)) enclose the EF-1-gamma C-terminal domain.

In terms of assembly, the eukaryotic elongation factor 1 complex (eEF1) is probably a heterohexamer. Two trimeric complexes, each composed of eEF1A (TEF1 or TEF2), eEF1Balpha (EFB1) and eEF1Bgamma (CAM1 or TEF4), are probably dimerized via the eF1Bgamma subunits. The eEF1B subcomplex with the GEF activity is formed of eEF1Balpha and eEF1Bgamma. TEF4 interacts with EFB1.

The protein resides in the cytoplasm. It participates in protein biosynthesis; polypeptide chain elongation. Functionally, subunit of the eukaryotic elongation factor 1 complex (eEF1). Probably plays a role in anchoring the complex to other cellular components. The sequence is that of Elongation factor 1-gamma 2 (TEF4) from Saccharomyces cerevisiae (strain ATCC 204508 / S288c) (Baker's yeast).